The following is a 230-amino-acid chain: Cytochrome c oxidase subunit 2 (230 aa).

Residues 1 to 14 (MAHPSQLGFQDAAS) lie on the Mitochondrial intermembrane side of the membrane. Residues 15–45 (PVMEELLHFHDHALMIVFLISTLVLYIIAAT) traverse the membrane as a helical segment. Residues 46-59 (ASTKLTDKYILDSQ) lie on the Mitochondrial matrix side of the membrane. A helical membrane pass occupies residues 60-87 (EIEVIWTIMPAVILILIALPSLRILYLM). The Mitochondrial intermembrane portion of the chain corresponds to 88-230 (DEINDPHLTV…NWSSLMLEDA (143 aa)). Cu cation-binding residues include His-161, Cys-196, Glu-198, Cys-200, His-204, and Met-207. Position 198 (Glu-198) interacts with Mg(2+).

The protein belongs to the cytochrome c oxidase subunit 2 family. In terms of assembly, component of the cytochrome c oxidase (complex IV, CIV), a multisubunit enzyme composed of 14 subunits. The complex is composed of a catalytic core of 3 subunits MT-CO1, MT-CO2 and MT-CO3, encoded in the mitochondrial DNA, and 11 supernumerary subunits COX4I, COX5A, COX5B, COX6A, COX6B, COX6C, COX7A, COX7B, COX7C, COX8 and NDUFA4, which are encoded in the nuclear genome. The complex exists as a monomer or a dimer and forms supercomplexes (SCs) in the inner mitochondrial membrane with NADH-ubiquinone oxidoreductase (complex I, CI) and ubiquinol-cytochrome c oxidoreductase (cytochrome b-c1 complex, complex III, CIII), resulting in different assemblies (supercomplex SCI(1)III(2)IV(1) and megacomplex MCI(2)III(2)IV(2)). Found in a complex with TMEM177, COA6, COX18, COX20, SCO1 and SCO2. Interacts with TMEM177 in a COX20-dependent manner. Interacts with COX20. Interacts with COX16. It depends on Cu cation as a cofactor.

Its subcellular location is the mitochondrion inner membrane. It catalyses the reaction 4 Fe(II)-[cytochrome c] + O2 + 8 H(+)(in) = 4 Fe(III)-[cytochrome c] + 2 H2O + 4 H(+)(out). In terms of biological role, component of the cytochrome c oxidase, the last enzyme in the mitochondrial electron transport chain which drives oxidative phosphorylation. The respiratory chain contains 3 multisubunit complexes succinate dehydrogenase (complex II, CII), ubiquinol-cytochrome c oxidoreductase (cytochrome b-c1 complex, complex III, CIII) and cytochrome c oxidase (complex IV, CIV), that cooperate to transfer electrons derived from NADH and succinate to molecular oxygen, creating an electrochemical gradient over the inner membrane that drives transmembrane transport and the ATP synthase. Cytochrome c oxidase is the component of the respiratory chain that catalyzes the reduction of oxygen to water. Electrons originating from reduced cytochrome c in the intermembrane space (IMS) are transferred via the dinuclear copper A center (CU(A)) of subunit 2 and heme A of subunit 1 to the active site in subunit 1, a binuclear center (BNC) formed by heme A3 and copper B (CU(B)). The BNC reduces molecular oxygen to 2 water molecules using 4 electrons from cytochrome c in the IMS and 4 protons from the mitochondrial matrix. The protein is Cytochrome c oxidase subunit 2 (mt-co2) of Tetraodon nigroviridis (Spotted green pufferfish).